Here is a 194-residue protein sequence, read N- to C-terminus: CASP-like protein 1D1 (194 aa).

A compositionally biased stretch (basic and acidic residues) spans 1 to 16 (MGSDETKSTLDTERST). The disordered stretch occupies residues 1–23 (MGSDETKSTLDTERSTVPRTGTT). At 1–31 (MGSDETKSTLDTERSTVPRTGTTTKSCSITQ) the chain is on the cytoplasmic side. A helical transmembrane segment spans residues 32 to 52 (VVLRFVLFAATLTSIVVMVTS). At 53-77 (KQTKNIFIPGTPIRIPAAKFTNSPA) the chain is on the extracellular side. The chain crosses the membrane as a helical span at residues 78-98 (LIYFVVALSVACFYSIVSTFV). At 99–109 (TVSAFKKHSCS) the chain is on the cytoplasmic side. A helical membrane pass occupies residues 110–130 (AILLLNLAIMDAVMVGIVASA). Topologically, residues 131–163 (TGAGGGVAYLGLKGNKEVRWGKICNIYDKFCRH) are extracellular. A helical membrane pass occupies residues 164-184 (VGGAIAVSLFASVILLLLSII). Residues 185–194 (SVLSLYKKIR) are Cytoplasmic-facing.

This sequence belongs to the Casparian strip membrane proteins (CASP) family. Homodimer and heterodimers.

It is found in the cell membrane. The sequence is that of CASP-like protein 1D1 from Arabidopsis lyrata subsp. lyrata (Lyre-leaved rock-cress).